The chain runs to 359 residues: Peptide chain release factor 1 (359 aa).

Residue Gln235 is modified to N5-methylglutamine. The tract at residues 282-306 (RQRADSERSADRKSQVGSGDRSERI) is disordered.

It belongs to the prokaryotic/mitochondrial release factor family. In terms of processing, methylated by PrmC. Methylation increases the termination efficiency of RF1.

It is found in the cytoplasm. Its function is as follows. Peptide chain release factor 1 directs the termination of translation in response to the peptide chain termination codons UAG and UAA. The sequence is that of Peptide chain release factor 1 from Rhizobium rhizogenes (strain K84 / ATCC BAA-868) (Agrobacterium radiobacter).